Reading from the N-terminus, the 423-residue chain is MRNFLDKIGEEALVVEDEVSTSFEAASILREHPRDLVILKNLKESDIPVISGLCNTREKIALSLNCRVHEITHRIVEAMENPTPISSVGGLDGYRSGRADLSELPILRHYRRDGGPYITAGVIFARDPDTGVRNASIHRMMVIGDDRLAVRIVPRHLYTYLQKAEERGEDLEIAIAIGMDPATLLATTTSIPIDADEMEVANTFHEGELELVRCEGVDMEVPPAEIILEGRILCGVREREGPFVDLTDTYDVVRDEPVISLERMHIRKDAMYHAILPAGFEHRLLQGLPQEPRIYRAVKNTVPTVRNVVLTEGGCCWLHAAVSIKKQTEGDGKNVIMAALAAHPSLKHVVVVDEDIDVLDPEEIEYAIATRVKGDDDILIVPGARGSSLDPAALPDGTTTKVGVDATAPLASAEKFQRVSRSE.

The Mn(2+) site is built by N134 and E197. The active-site Proton acceptor is the D245.

It belongs to the UbiD family. The cofactor is prenylated FMN. Mn(2+) is required as a cofactor.

The catalysed reaction is (2E)-3-methyl-5-phosphooxypent-2-enoate + H(+) = isopentenyl phosphate + CO2. Its pathway is isoprenoid biosynthesis; isopentenyl diphosphate biosynthesis via mevalonate pathway. In terms of biological role, catalyzes the conversion of trans-anhydromevalonate 5-phosphate (tAHMP) into isopentenyl phosphate. Involved in the archaeal mevalonate (MVA) pathway, which provides fundamental precursors for isoprenoid biosynthesis, such as isopentenyl diphosphate (IPP) and dimethylallyl diphosphate (DMAPP). This is Anhydromevalonate phosphate decarboxylase from Methanothermobacter thermautotrophicus (strain ATCC 29096 / DSM 1053 / JCM 10044 / NBRC 100330 / Delta H) (Methanobacterium thermoautotrophicum).